Consider the following 320-residue polypeptide: 2-oxoglutarate-dependent dioxygenase thnC (320 aa).

Residues 174-278 form the Fe2OG dioxygenase domain; it reads PLVQMKLIRY…HSCATFWHGD (105 aa). 3 residues coordinate Fe cation: His199, Asp201, and His258. Arg268 lines the 2-oxoglutarate pocket.

Belongs to the iron/ascorbate-dependent oxidoreductase family. Fe(2+) serves as cofactor.

It carries out the reaction trihazone A + 2-oxoglutarate + O2 + H(+) = trihazone D + succinate + 2 CO2 + H2O. It participates in secondary metabolite biosynthesis. In terms of biological role, 2-oxoglutarate-dependent dioxygenase; part of the gene cluster that produces the tetronate natural products trihazones. ThnC catalyzes the oxidative decarboxylation of trihazone A to trihazone D. The C4 hydrogen is first abstracted by the iron-oxo species generated in ThnC to give a tertiary radical at C4. This is followed by decarboxylation and removal of the second electron by the FeIII-OH center to give trihazone D. The pathway begins with the formation of trihazone A by the hybrid PKS-NRPS synthetase thnA and the trans-enoyl reductase thnE. Trihazone A is further decarboxylated by the 2-oxoglutarate-dependent dioxygenase thnC to produce trihazone D. The function of the FAD-dependent monooxygenase thnD has still to be identified. The protein is 2-oxoglutarate-dependent dioxygenase thnC of Trichoderma harzianum (Hypocrea lixii).